The primary structure comprises 619 residues: tRNA uridine 5-carboxymethylaminomethyl modification enzyme MnmG (619 aa).

Residues 14–19 (GAGHAG), V126, and S181 contribute to the FAD site. Residue 273–287 (GPRYCPSIEDKIMRF) coordinates NAD(+). Q370 serves as a coordination point for FAD.

It belongs to the MnmG family. In terms of assembly, homodimer. Heterotetramer of two MnmE and two MnmG subunits. FAD serves as cofactor.

It is found in the cytoplasm. In terms of biological role, NAD-binding protein involved in the addition of a carboxymethylaminomethyl (cmnm) group at the wobble position (U34) of certain tRNAs, forming tRNA-cmnm(5)s(2)U34. The protein is tRNA uridine 5-carboxymethylaminomethyl modification enzyme MnmG of Syntrophotalea carbinolica (strain DSM 2380 / NBRC 103641 / GraBd1) (Pelobacter carbinolicus).